Consider the following 308-residue polypeptide: Ribonuclease Z (308 aa).

Zn(2+) is bound by residues H63, H65, D67, H68, H140, D211, and H269. Catalysis depends on D67, which acts as the Proton acceptor.

The protein belongs to the RNase Z family. In terms of assembly, homodimer. The cofactor is Zn(2+).

The catalysed reaction is Endonucleolytic cleavage of RNA, removing extra 3' nucleotides from tRNA precursor, generating 3' termini of tRNAs. A 3'-hydroxy group is left at the tRNA terminus and a 5'-phosphoryl group is left at the trailer molecule.. Its function is as follows. Zinc phosphodiesterase, which displays some tRNA 3'-processing endonuclease activity. Probably involved in tRNA maturation, by removing a 3'-trailer from precursor tRNA. The sequence is that of Ribonuclease Z from Bacillus velezensis (strain DSM 23117 / BGSC 10A6 / LMG 26770 / FZB42) (Bacillus amyloliquefaciens subsp. plantarum).